A 112-amino-acid polypeptide reads, in one-letter code: T cell receptor alpha variable 9-1 (112 aa).

Residues 1–20 (MNSSPGPAIALFLMFGGING) form the signal peptide. Positions 21–112 (DSVVQTEGQV…DSAVYFCALS (92 aa)) constitute an Ig-like domain. An N-linked (GlcNAc...) asparagine glycan is attached at asparagine 41. A disulfide bridge connects residues cysteine 42 and cysteine 109.

In terms of assembly, alpha-beta TR is a heterodimer composed of an alpha and beta chain; disulfide-linked. The alpha-beta TR is associated with the transmembrane signaling CD3 coreceptor proteins to form the TR-CD3 (TcR or TCR). The assembly of alpha-beta TR heterodimers with CD3 occurs in the endoplasmic reticulum where a single alpha-beta TR heterodimer associates with one CD3D-CD3E heterodimer, one CD3G-CD3E heterodimer and one CD247 homodimer forming a stable octameric structure. CD3D-CD3E and CD3G-CD3E heterodimers preferentially associate with TR alpha and TR beta chains, respectively. The association of the CD247 homodimer is the last step of TcR assembly in the endoplasmic reticulum and is required for transport to the cell surface.

The protein localises to the cell membrane. Its function is as follows. V region of the variable domain of T cell receptor (TR) alpha chain that participates in the antigen recognition. Alpha-beta T cell receptors are antigen specific receptors which are essential to the immune response and are present on the cell surface of T lymphocytes. Recognize peptide-major histocompatibility (MH) (pMH) complexes that are displayed by antigen presenting cells (APC), a prerequisite for efficient T cell adaptive immunity against pathogens. Binding of alpha-beta TR to pMH complex initiates TR-CD3 clustering on the cell surface and intracellular activation of LCK that phosphorylates the ITAM motifs of CD3G, CD3D, CD3E and CD247 enabling the recruitment of ZAP70. In turn ZAP70 phosphorylates LAT, which recruits numerous signaling molecules to form the LAT signalosome. The LAT signalosome propagates signal branching to three major signaling pathways, the calcium, the mitogen-activated protein kinase (MAPK) kinase and the nuclear factor NF-kappa-B (NF-kB) pathways, leading to the mobilization of transcription factors that are critical for gene expression and essential for T cell growth and differentiation. The T cell repertoire is generated in the thymus, by V-(D)-J rearrangement. This repertoire is then shaped by intrathymic selection events to generate a peripheral T cell pool of self-MH restricted, non-autoaggressive T cells. Post-thymic interaction of alpha-beta TR with the pMH complexes shapes TR structural and functional avidity. The chain is T cell receptor alpha variable 9-1 from Homo sapiens (Human).